We begin with the raw amino-acid sequence, 119 residues long: Large ribosomal subunit protein uL24 (119 aa).

Belongs to the universal ribosomal protein uL24 family. In terms of assembly, part of the 50S ribosomal subunit.

Its function is as follows. One of two assembly initiator proteins, it binds directly to the 5'-end of the 23S rRNA, where it nucleates assembly of the 50S subunit. Functionally, located at the polypeptide exit tunnel on the outside of the subunit. The polypeptide is Large ribosomal subunit protein uL24 (Methanococcus maripaludis (strain C5 / ATCC BAA-1333)).